A 1438-amino-acid chain; its full sequence is DNA polymerase III PolC-type (1438 aa).

The Exonuclease domain occupies 422–578 (YVVFDVETTG…YDTEATAYIF (157 aa)).

The protein belongs to the DNA polymerase type-C family. PolC subfamily.

The protein localises to the cytoplasm. It catalyses the reaction DNA(n) + a 2'-deoxyribonucleoside 5'-triphosphate = DNA(n+1) + diphosphate. In terms of biological role, required for replicative DNA synthesis. This DNA polymerase also exhibits 3' to 5' exonuclease activity. The chain is DNA polymerase III PolC-type from Staphylococcus aureus (strain MRSA252).